A 151-amino-acid chain; its full sequence is 3-hydroxyacyl-[acyl-carrier-protein] dehydratase FabZ (151 aa).

Residue His54 is part of the active site.

The protein belongs to the thioester dehydratase family. FabZ subfamily.

The protein resides in the cytoplasm. The enzyme catalyses a (3R)-hydroxyacyl-[ACP] = a (2E)-enoyl-[ACP] + H2O. Its function is as follows. Involved in unsaturated fatty acids biosynthesis. Catalyzes the dehydration of short chain beta-hydroxyacyl-ACPs and long chain saturated and unsaturated beta-hydroxyacyl-ACPs. This chain is 3-hydroxyacyl-[acyl-carrier-protein] dehydratase FabZ, found in Sodalis glossinidius (strain morsitans).